The following is a 279-amino-acid chain: Phosphate import ATP-binding protein PstB (279 aa).

One can recognise an ABC transporter domain in the interval 33–274 (LDINKLNLFY…PLKKKTEDYI (242 aa)). Residue 65–72 (GPSGCGKS) coordinates ATP.

The protein belongs to the ABC transporter superfamily. Phosphate importer (TC 3.A.1.7) family. In terms of assembly, the complex is composed of two ATP-binding proteins (PstB), two transmembrane proteins (PstC and PstA) and a solute-binding protein (PstS).

It is found in the cell inner membrane. It carries out the reaction phosphate(out) + ATP + H2O = ADP + 2 phosphate(in) + H(+). Functionally, part of the ABC transporter complex PstSACB involved in phosphate import. Responsible for energy coupling to the transport system. This is Phosphate import ATP-binding protein PstB from Colwellia psychrerythraea (strain 34H / ATCC BAA-681) (Vibrio psychroerythus).